A 265-amino-acid polypeptide reads, in one-letter code: 4-hydroxy-tetrahydrodipicolinate reductase (265 aa).

NAD(+) is bound by residues 7 to 12 (GASGRM) and D33. R34 contributes to the NADP(+) binding site. NAD(+) is bound by residues 96-98 (GTT) and 120-123 (AANM). Residue H153 is the Proton donor/acceptor of the active site. A (S)-2,3,4,5-tetrahydrodipicolinate-binding site is contributed by H154. Residue K157 is the Proton donor of the active site. Residue 163–164 (GT) participates in (S)-2,3,4,5-tetrahydrodipicolinate binding.

Belongs to the DapB family.

Its subcellular location is the cytoplasm. The enzyme catalyses (S)-2,3,4,5-tetrahydrodipicolinate + NAD(+) + H2O = (2S,4S)-4-hydroxy-2,3,4,5-tetrahydrodipicolinate + NADH + H(+). The catalysed reaction is (S)-2,3,4,5-tetrahydrodipicolinate + NADP(+) + H2O = (2S,4S)-4-hydroxy-2,3,4,5-tetrahydrodipicolinate + NADPH + H(+). Its pathway is amino-acid biosynthesis; L-lysine biosynthesis via DAP pathway; (S)-tetrahydrodipicolinate from L-aspartate: step 4/4. In terms of biological role, catalyzes the conversion of 4-hydroxy-tetrahydrodipicolinate (HTPA) to tetrahydrodipicolinate. This Burkholderia ambifaria (strain ATCC BAA-244 / DSM 16087 / CCUG 44356 / LMG 19182 / AMMD) (Burkholderia cepacia (strain AMMD)) protein is 4-hydroxy-tetrahydrodipicolinate reductase.